The chain runs to 270 residues: Diaminopimelate epimerase (270 aa).

Substrate-binding residues include Asn-15, Gln-49, and Asn-66. Cys-75 functions as the Proton donor in the catalytic mechanism. Substrate is bound by residues 76 to 77 (GN), Asn-155, Asn-187, and 204 to 205 (ER). The active-site Proton acceptor is Cys-213. Position 214 to 215 (214 to 215 (GS)) interacts with substrate.

Belongs to the diaminopimelate epimerase family. In terms of assembly, homodimer.

It localises to the cytoplasm. It catalyses the reaction (2S,6S)-2,6-diaminopimelate = meso-2,6-diaminopimelate. The protein operates within amino-acid biosynthesis; L-lysine biosynthesis via DAP pathway; DL-2,6-diaminopimelate from LL-2,6-diaminopimelate: step 1/1. Catalyzes the stereoinversion of LL-2,6-diaminopimelate (L,L-DAP) to meso-diaminopimelate (meso-DAP), a precursor of L-lysine and an essential component of the bacterial peptidoglycan. The chain is Diaminopimelate epimerase from Rickettsia felis (strain ATCC VR-1525 / URRWXCal2) (Rickettsia azadi).